We begin with the raw amino-acid sequence, 284 residues long: 4-diphosphocytidyl-2-C-methyl-D-erythritol kinase (284 aa).

Residue Lys-14 is part of the active site. 98–108 (PMGGGLGGGSS) contributes to the ATP binding site. Asp-140 is a catalytic residue.

The protein belongs to the GHMP kinase family. IspE subfamily.

It catalyses the reaction 4-CDP-2-C-methyl-D-erythritol + ATP = 4-CDP-2-C-methyl-D-erythritol 2-phosphate + ADP + H(+). It participates in isoprenoid biosynthesis; isopentenyl diphosphate biosynthesis via DXP pathway; isopentenyl diphosphate from 1-deoxy-D-xylulose 5-phosphate: step 3/6. Functionally, catalyzes the phosphorylation of the position 2 hydroxy group of 4-diphosphocytidyl-2C-methyl-D-erythritol. The chain is 4-diphosphocytidyl-2-C-methyl-D-erythritol kinase from Shewanella baltica (strain OS185).